We begin with the raw amino-acid sequence, 339 residues long: NADH-quinone oxidoreductase subunit H (339 aa).

A run of 9 helical transmembrane segments spans residues 9-29 (IFPL…LILC), 50-70 (PNVV…KLLF), 82-102 (ILFI…WAVI), 115-135 (VGVL…IIAG), 161-181 (MGLV…SEII), 187-207 (IPWW…ISVL), 235-255 (MGFA…SAMT), 275-295 (IPGF…FLWI), and 311-331 (GWKV…SVLV).

It belongs to the complex I subunit 1 family. NDH-1 is composed of 14 different subunits. Subunits NuoA, H, J, K, L, M, N constitute the membrane sector of the complex.

It localises to the cell inner membrane. It catalyses the reaction a quinone + NADH + 5 H(+)(in) = a quinol + NAD(+) + 4 H(+)(out). Its function is as follows. NDH-1 shuttles electrons from NADH, via FMN and iron-sulfur (Fe-S) centers, to quinones in the respiratory chain. The immediate electron acceptor for the enzyme in this species is believed to be ubiquinone. Couples the redox reaction to proton translocation (for every two electrons transferred, four hydrogen ions are translocated across the cytoplasmic membrane), and thus conserves the redox energy in a proton gradient. This subunit may bind ubiquinone. This Rickettsia rickettsii (strain Iowa) protein is NADH-quinone oxidoreductase subunit H.